The primary structure comprises 353 residues: Tsukushi (353 aa).

The signal sequence occupies residues Met1–Thr16. The 42-residue stretch at Thr17–Leu58 folds into the LRRNT domain. LRR repeat units follow at residues Asp59–Gly80, Thr85–Arg106, Tyr109–Ser130, Pro132–Thr153, Ala159–Ala179, Thr185–Pro206, Leu207–Gly227, Gly230–Gly249, Gly255–Ser276, and Ser280–His301. A glycan (N-linked (GlcNAc...) asparagine) is linked at Asn74. N-linked (GlcNAc...) asparagine glycosylation is present at Asn137.

In terms of assembly, interacts with FZD4 (via FZ domain); competes with WNT2B for binding to FZD4, inhibiting Wnt signaling and repressing peripheral eye development. Interacts with TGFB1; the interaction contributes to regulation of the hair cycle. Interacts with netrin. Interacts with CCN2.

The protein localises to the secreted. Functionally, contributes to various developmental events and other processes such as wound healing and cholesterol homeostasis through its interactions with multiple signaling pathways. Wnt signaling inhibitor which competes with WNT2B for binding to Wnt receptor FZD4 and represses WNT2B-dependent development of the peripheral eye. Plays a role in regulating the hair cycle by controlling TGFB1 signaling. Required for the development of the anterior commissure in the brain by inhibiting neurite outgrowth. Essential for terminal differentiation of hippocampal neural stem cells. Plays a role in regulating bone elongation and bone mass by modulating growth plate chondrocyte function and overall body size. Required for development of the inner ear through its involvement in stereocilia formation in inner hair cells. Facilitates wound healing by inhibiting secretion of TGFB1 from macrophages which prevents myofibroblast differentiation, maintaining inflammatory cell quiescence. Plays a role in cholesterol homeostasis by reducing circulating high-density lipoprotein cholesterol, lowering cholesterol efflux capacity and decreasing cholesterol-to-bile acid conversion in the liver. In one study, shown to negatively regulate sympathetic innervation in brown fat, leading to reduced energy expenditure. In another study, shown not to affect brown fat thermogenic capacity, body weight gain or glucose homeostasis. The sequence is that of Tsukushi (TSKU) from Homo sapiens (Human).